The following is a 440-amino-acid chain: Stromal membrane-associated protein 1 (440 aa).

The 126-residue stretch at 18-143 (QLILSKLLRE…IAITNKEKEK (126 aa)) folds into the Arf-GAP domain. The segment at 33–56 (CADCEAKGPRWASWNIGVFICIRC) adopts a C4-type zinc-finger fold. Basic and acidic residues-rich tracts occupy residues 140 to 158 (EKEK…EKPA) and 165 to 178 (KLPK…EPKK). Disordered regions lie at residues 140-211 (EKEK…PATA) and 410-440 (NASA…QLWK). Positions 192-196 (LLGLD) match the Interaction with clathrin heavy chains motif. Over residues 420–440 (STTAGWSGSSSGQTLSTQLWK) the composition is skewed to low complexity.

Interacts with ARF6. Interacts with clathrin heavy chains via the clathrin box-like motif. Detected in adult brain, lung, heart, liver, ovary and bone marrow. Detected in stromal cells of the red pulp of adult spleen.

The protein localises to the cell membrane. GTPase activating protein that acts on ARF6. Plays a role in clathrin-dependent endocytosis. May play a role in erythropoiesis. The polypeptide is Stromal membrane-associated protein 1 (Smap1) (Mus musculus (Mouse)).